We begin with the raw amino-acid sequence, 487 residues long: L-tartrate/succinate antiporter (487 aa).

14 helical membrane passes run 10–30, 33–53, 54–74, 93–113, 137–157, 189–209, 236–256, 292–312, 313–333, 340–360, 370–390, 393–413, 418–438, and 465–485; these read YLAP…AGLE, TWLY…EPVP, GAVV…WLLF, WAVF…FMFG, TLFL…VTPS, IGSY…AIFL, FLGM…LAYV, LMVG…AAMV, GYSV…DIVS, VFFW…TGFI, SLSG…FYLL, FFAS…AAAL, IPLP…SILT, and IFGL…MPVV.

It belongs to the SLC13A/DASS transporter (TC 2.A.47) family. DIT1 subfamily.

It localises to the cell inner membrane. The enzyme catalyses (2R,3R)-tartrate(out) + succinate(in) = (2R,3R)-tartrate(in) + succinate(out). Catalyzes the uptake of tartrate in exchange for intracellular succinate. Essential for anaerobic L-tartrate fermentation. The chain is L-tartrate/succinate antiporter (ttdT) from Shigella boydii serotype 4 (strain Sb227).